Reading from the N-terminus, the 502-residue chain is Xylulose kinase (502 aa).

Substrate is bound at residue 82 to 83; the sequence is MH. The Proton acceptor role is filled by aspartate 240.

Belongs to the FGGY kinase family.

It carries out the reaction D-xylulose + ATP = D-xylulose 5-phosphate + ADP + H(+). Its function is as follows. Catalyzes the phosphorylation of D-xylulose to D-xylulose 5-phosphate. This is Xylulose kinase from Levilactobacillus brevis (Lactobacillus brevis).